The chain runs to 178 residues: Interleukin-10 (178 aa).

The N-terminal stretch at 1 to 18 is a signal peptide; the sequence is MPGSALLCCLLLLAGVKT. Asparagine 29 is a glycosylation site (N-linked (GlcNAc...) asparagine). Cystine bridges form between cysteine 30–cysteine 126 and cysteine 80–cysteine 132. N-linked (GlcNAc...) asparagine glycosylation is present at asparagine 134.

It belongs to the IL-10 family. In terms of assembly, homodimer. Interacts with IL10RA and IL10RB.

Its subcellular location is the secreted. Its function is as follows. Major immune regulatory cytokine that acts on many cells of the immune system where it has profound anti-inflammatory functions, limiting excessive tissue disruption caused by inflammation. Mechanistically, IL10 binds to its heterotetrameric receptor comprising IL10RA and IL10RB leading to JAK1 and STAT2-mediated phosphorylation of STAT3. In turn, STAT3 translocates to the nucleus where it drives expression of anti-inflammatory mediators. Targets antigen-presenting cells (APCs) such as macrophages and monocytes and inhibits their release of pro-inflammatory cytokines including granulocyte-macrophage colony-stimulating factor /GM-CSF, granulocyte colony-stimulating factor/G-CSF, IL-1 alpha, IL-1 beta, IL-6, IL-8 and TNF-alpha. Also interferes with antigen presentation by reducing the expression of MHC-class II and co-stimulatory molecules, thereby inhibiting their ability to induce T cell activation. In addition, controls the inflammatory response of macrophages by reprogramming essential metabolic pathways including mTOR signaling. The chain is Interleukin-10 (Il10) from Rattus norvegicus (Rat).